A 468-amino-acid polypeptide reads, in one-letter code: Siroheme synthase 1 (468 aa).

The interval 1–204 (MDYLPIFCRL…GDKASANQLA (204 aa)) is precorrin-2 dehydrogenase /sirohydrochlorin ferrochelatase. NAD(+) is bound by residues 22–23 (EV) and 43–44 (PA). Serine 128 is subject to Phosphoserine. The uroporphyrinogen-III C-methyltransferase stretch occupies residues 216–468 (GEVILVGAGP…NHGVQAAALA (253 aa)). Residue proline 225 coordinates S-adenosyl-L-methionine. The Proton acceptor role is filled by aspartate 248. Lysine 270 serves as the catalytic Proton donor. Residues 301–303 (GGD), isoleucine 306, 331–332 (TA), methionine 383, and glycine 412 contribute to the S-adenosyl-L-methionine site.

The protein in the N-terminal section; belongs to the precorrin-2 dehydrogenase / sirohydrochlorin ferrochelatase family. This sequence in the C-terminal section; belongs to the precorrin methyltransferase family.

It catalyses the reaction uroporphyrinogen III + 2 S-adenosyl-L-methionine = precorrin-2 + 2 S-adenosyl-L-homocysteine + H(+). The enzyme catalyses precorrin-2 + NAD(+) = sirohydrochlorin + NADH + 2 H(+). The catalysed reaction is siroheme + 2 H(+) = sirohydrochlorin + Fe(2+). The protein operates within cofactor biosynthesis; adenosylcobalamin biosynthesis; precorrin-2 from uroporphyrinogen III: step 1/1. Its pathway is cofactor biosynthesis; adenosylcobalamin biosynthesis; sirohydrochlorin from precorrin-2: step 1/1. It participates in porphyrin-containing compound metabolism; siroheme biosynthesis; precorrin-2 from uroporphyrinogen III: step 1/1. It functions in the pathway porphyrin-containing compound metabolism; siroheme biosynthesis; siroheme from sirohydrochlorin: step 1/1. The protein operates within porphyrin-containing compound metabolism; siroheme biosynthesis; sirohydrochlorin from precorrin-2: step 1/1. Functionally, multifunctional enzyme that catalyzes the SAM-dependent methylations of uroporphyrinogen III at position C-2 and C-7 to form precorrin-2 via precorrin-1. Then it catalyzes the NAD-dependent ring dehydrogenation of precorrin-2 to yield sirohydrochlorin. Finally, it catalyzes the ferrochelation of sirohydrochlorin to yield siroheme. The polypeptide is Siroheme synthase 1 (Aeromonas salmonicida (strain A449)).